Consider the following 221-residue polypeptide: Carbonic anhydrase (221 aa).

Zn(2+) is bound by residues C57, D59, H112, and C115.

The protein belongs to the beta-class carbonic anhydrase family. The cofactor is Zn(2+).

Its subcellular location is the cytoplasm. The protein localises to the nucleus. The protein resides in the mitochondrion intermembrane space. The enzyme catalyses hydrogencarbonate + H(+) = CO2 + H2O. Functionally, catalyzes the reversible hydration of CO(2) to H(2)CO(3). The main role may be to provide inorganic carbon for the bicarbonate-dependent carboxylation reactions catalyzed by pyruvate carboxylase, acetyl-CoA carboxylase and carbamoyl-phosphate synthetase. Involved in protection against oxidative damage. Encodes a substrate for the non-classical protein export pathway for proteins that lack a cleavable signal sequence. The sequence is that of Carbonic anhydrase (NCE103) from Saccharomyces cerevisiae (strain ATCC 204508 / S288c) (Baker's yeast).